A 285-amino-acid chain; its full sequence is MTAHTIDGLALSRQLRSALAQRAAALTARGHQPGLAVILVGEDPASAIYVRNKIRACQDNGLRSVLEKYTANLSQAALLERIAALNADPGVHGILVQMPLPKHIDPHRVTEAIASTKDVDGYSVLSAGALLAGLDGFRPCTPYGCMKLIESTGQAIAGRHAVIVGRSQTVGKPMALLLLQANATVTLCHSATPDLGYHTRQADIVVAAVGRARMLTAEMVKPGAIVIDVGINRQADGKLCGDVDFDRVKQVAGWITPVPGGVGPMTITMLLVNTMQATERSAANP.

NADP(+) is bound by residues 165–167, S190, and I231; that span reads GRS.

It belongs to the tetrahydrofolate dehydrogenase/cyclohydrolase family. In terms of assembly, homodimer.

It carries out the reaction (6R)-5,10-methylene-5,6,7,8-tetrahydrofolate + NADP(+) = (6R)-5,10-methenyltetrahydrofolate + NADPH. The catalysed reaction is (6R)-5,10-methenyltetrahydrofolate + H2O = (6R)-10-formyltetrahydrofolate + H(+). Its pathway is one-carbon metabolism; tetrahydrofolate interconversion. In terms of biological role, catalyzes the oxidation of 5,10-methylenetetrahydrofolate to 5,10-methenyltetrahydrofolate and then the hydrolysis of 5,10-methenyltetrahydrofolate to 10-formyltetrahydrofolate. The polypeptide is Bifunctional protein FolD (Verminephrobacter eiseniae (strain EF01-2)).